A 191-amino-acid polypeptide reads, in one-letter code: PBAN-type neuropeptides (191 aa).

A signal peptide spans 1–17 (MFSPLLFFAVSISCVLA). L44 carries the leucine amide modification. A propeptide spanning residues 48–91 (SLRISTEDNRQAFFKLLEAADALKYYYDRLPYEMQADEPETRVT) is cleaved from the precursor. Residues L100, L120, L156, and L166 each carry the leucine amide modification. Residues 169–191 (ELSYDMLPSKLRLVRSTNRTQST) constitute a propeptide that is removed on maturation.

The protein belongs to the pyrokinin family. Expressed in the subesophageal ganglion.

It is found in the secreted. Its function is as follows. A hormone that controls sex pheromone production in females and pheromone responsiveness in male. This Spodoptera littoralis (Egyptian cotton leafworm) protein is PBAN-type neuropeptides.